Consider the following 82-residue polypeptide: Putative antitoxin Saci_0468 (82 aa).

The protein belongs to the UPF0330 family.

Its function is as follows. Possibly the antitoxin component of a type II toxin-antitoxin (TA) system. The polypeptide is Putative antitoxin Saci_0468 (Sulfolobus acidocaldarius (strain ATCC 33909 / DSM 639 / JCM 8929 / NBRC 15157 / NCIMB 11770)).